Consider the following 539-residue polypeptide: Dihydrolipoyllysine-residue acetyltransferase component 2 of pyruvate dehydrogenase complex, mitochondrial (539 aa).

A mitochondrion-targeting transit peptide spans 1–102; it reads MASRIINHSK…SSQMRSVRGF (102 aa). A disordered region spans residues 102–122; it reads FSSSSDLPPHQEIGMPSLSPT. Positions 111–187 constitute a Lipoyl-binding domain; the sequence is HQEIGMPSLS…QVGEVIAITV (77 aa). Lys-152 carries the post-translational modification N6-lipoyllysine. Residues 196 to 244 form a disordered region; that stretch reads FKDYTPSSDTGPAAPEAKPAPSLPKEEKVEKPASAPEAKISKPSSAPSE. One can recognise a Peripheral subunit-binding (PSBD) domain in the interval 248–285; the sequence is FASPLARKLAEDNNVPLSSIKGTGPEGRIVKADVEDFL. Catalysis depends on residues His-512 and Asp-516.

Belongs to the 2-oxoacid dehydrogenase family. It depends on (R)-lipoate as a cofactor.

The protein resides in the mitochondrion matrix. It catalyses the reaction N(6)-[(R)-dihydrolipoyl]-L-lysyl-[protein] + acetyl-CoA = N(6)-[(R)-S(8)-acetyldihydrolipoyl]-L-lysyl-[protein] + CoA. The pyruvate dehydrogenase complex catalyzes the overall conversion of pyruvate to acetyl-CoA and CO(2). It contains multiple copies of three enzymatic components: pyruvate dehydrogenase (E1), dihydrolipoamide acetyltransferase (E2) and lipoamide dehydrogenase (E3). The protein is Dihydrolipoyllysine-residue acetyltransferase component 2 of pyruvate dehydrogenase complex, mitochondrial of Arabidopsis thaliana (Mouse-ear cress).